Here is a 368-residue protein sequence, read N- to C-terminus: Agmatine deiminase (368 aa).

Cysteine 357 functions as the Amidino-cysteine intermediate in the catalytic mechanism.

It belongs to the agmatine deiminase family. As to quaternary structure, homodimer.

It catalyses the reaction agmatine + H2O = N-carbamoylputrescine + NH4(+). Its pathway is amine and polyamine biosynthesis; putrescine biosynthesis via agmatine pathway; N-carbamoylputrescine from agmatine: step 1/1. Mediates the hydrolysis of agmatine into N-carbamoylputrescine in the arginine decarboxylase (ADC) pathway of putrescine biosynthesis, a basic polyamine. In Pseudomonas syringae pv. tomato (strain ATCC BAA-871 / DC3000), this protein is Agmatine deiminase.